The sequence spans 86 residues: Putative regulatory protein Dvul_2085 (86 aa).

This sequence belongs to the RemA family.

This is Putative regulatory protein Dvul_2085 from Nitratidesulfovibrio vulgaris (strain DP4) (Desulfovibrio vulgaris).